Reading from the N-terminus, the 464-residue chain is 3-isopropylmalate dehydratase large subunit (464 aa).

[4Fe-4S] cluster contacts are provided by Cys337, Cys397, and Cys400.

The protein belongs to the aconitase/IPM isomerase family. LeuC type 1 subfamily. Heterodimer of LeuC and LeuD. The cofactor is [4Fe-4S] cluster.

The enzyme catalyses (2R,3S)-3-isopropylmalate = (2S)-2-isopropylmalate. It functions in the pathway amino-acid biosynthesis; L-leucine biosynthesis; L-leucine from 3-methyl-2-oxobutanoate: step 2/4. Functionally, catalyzes the isomerization between 2-isopropylmalate and 3-isopropylmalate, via the formation of 2-isopropylmaleate. The protein is 3-isopropylmalate dehydratase large subunit of Bacillus cereus (strain 03BB102).